Consider the following 158-residue polypeptide: NAD(P)H-quinone oxidoreductase subunit J, chloroplastic (158 aa).

Belongs to the complex I 30 kDa subunit family. NDH is composed of at least 16 different subunits, 5 of which are encoded in the nucleus.

The protein resides in the plastid. It localises to the chloroplast thylakoid membrane. The enzyme catalyses a plastoquinone + NADH + (n+1) H(+)(in) = a plastoquinol + NAD(+) + n H(+)(out). The catalysed reaction is a plastoquinone + NADPH + (n+1) H(+)(in) = a plastoquinol + NADP(+) + n H(+)(out). NDH shuttles electrons from NAD(P)H:plastoquinone, via FMN and iron-sulfur (Fe-S) centers, to quinones in the photosynthetic chain and possibly in a chloroplast respiratory chain. The immediate electron acceptor for the enzyme in this species is believed to be plastoquinone. Couples the redox reaction to proton translocation, and thus conserves the redox energy in a proton gradient. The polypeptide is NAD(P)H-quinone oxidoreductase subunit J, chloroplastic (Oenothera argillicola (Appalachian evening primrose)).